The primary structure comprises 62 residues: Large ribosomal subunit protein bL28 (62 aa).

This sequence belongs to the bacterial ribosomal protein bL28 family.

This Moorella thermoacetica (strain ATCC 39073 / JCM 9320) protein is Large ribosomal subunit protein bL28.